A 369-amino-acid chain; its full sequence is MKIKPQIIGLPPYKPGKPMEDVKRELGLETVVKLASNENPFGASPKVAEAIQEALHHTAIYPDGYARTLRDKVAHYVGVAPEELIFGNGSDEVIQILCRAFLNEQTNTVMAEPTFSQYKLNAVIEGAELREVPLKDGVHDLDGMLEVIDENTRIVWVCNPNNPTGTYVSAEAFQSFLAKVPEDVLVVSDEAYVEYVTADDYPDTVPMIRTYKNLVVLRTFSKVFGLAALRIGYGVANQALIEKIEPVRPPFNNSTFSQVAAVAALEDEAFVQSSVEKNNEGMEQLTEWCSRMGLDYFPSQTNFLLIHVNRSSDDVFNAMLKKGYIIRSGRALGYPAWIRITIGSKEQNDGCLAALADVLAEELTTQHLS.

N6-(pyridoxal phosphate)lysine is present on K222.

It belongs to the class-II pyridoxal-phosphate-dependent aminotransferase family. Histidinol-phosphate aminotransferase subfamily. Homodimer. Requires pyridoxal 5'-phosphate as cofactor.

The enzyme catalyses L-histidinol phosphate + 2-oxoglutarate = 3-(imidazol-4-yl)-2-oxopropyl phosphate + L-glutamate. Its pathway is amino-acid biosynthesis; L-histidine biosynthesis; L-histidine from 5-phospho-alpha-D-ribose 1-diphosphate: step 7/9. The chain is Histidinol-phosphate aminotransferase from Halalkalibacterium halodurans (strain ATCC BAA-125 / DSM 18197 / FERM 7344 / JCM 9153 / C-125) (Bacillus halodurans).